We begin with the raw amino-acid sequence, 208 residues long: Small ribosomal subunit protein uS4 (208 aa).

Positions 98–161 (QRLDNVVYRM…KTNSQILRAI (64 aa)) constitute an S4 RNA-binding domain.

This sequence belongs to the universal ribosomal protein uS4 family. In terms of assembly, part of the 30S ribosomal subunit. Contacts protein S5. The interaction surface between S4 and S5 is involved in control of translational fidelity.

Its function is as follows. One of the primary rRNA binding proteins, it binds directly to 16S rRNA where it nucleates assembly of the body of the 30S subunit. With S5 and S12 plays an important role in translational accuracy. This Sulfurovum sp. (strain NBC37-1) protein is Small ribosomal subunit protein uS4.